Here is a 92-residue protein sequence, read N- to C-terminus: Putative septation protein SpoVG (92 aa).

This sequence belongs to the SpoVG family.

Its function is as follows. Could be involved in septation. The sequence is that of Putative septation protein SpoVG from Clostridioides difficile (strain 630) (Peptoclostridium difficile).